We begin with the raw amino-acid sequence, 198 residues long: Guanine nucleotide-binding protein subunit alpha-11 (198 aa).

Residues 1–11 form a G1 motif region; the sequence is LLGTGESGKST. The G-alpha domain occupies 1–198; sequence LLGTGESGKS…LSEYDHVLVE (198 aa). GTP is bound by residues 3–10 and 137–140; these read GTGESGKS and LRVR. A Mg(2+)-binding site is contributed by Ser10. Residues 135–143 are G2 motif; sequence DVLRVRVPT. Thr143 is a Mg(2+) binding site. The tract at residues 158 to 167 is G3 motif; sequence FRMVDVGGQR.

Belongs to the G-alpha family. G(q) subfamily. As to quaternary structure, g proteins are composed of 3 units; alpha, beta and gamma. The alpha chain contains the guanine nucleotide binding site. Interacts with RGS22. Interacts with NTSR1.

Its subcellular location is the cell membrane. It is found in the cytoplasm. The catalysed reaction is GTP + H2O = GDP + phosphate + H(+). In terms of biological role, guanine nucleotide-binding proteins (G proteins) function as transducers downstream of G protein-coupled receptors (GPCRs) in numerous signaling cascades. The alpha chain contains the guanine nucleotide binding site and alternates between an active, GTP-bound state and an inactive, GDP-bound state. Signaling by an activated GPCR promotes GDP release and GTP binding. The alpha subunit has a low GTPase activity that converts bound GTP to GDP, thereby terminating the signal. Both GDP release and GTP hydrolysis are modulated by numerous regulatory proteins. Signaling is mediated via phospholipase C-beta-dependent inositol lipid hydrolysis for signal propagation: activates phospholipase C-beta: following GPCR activation, GNA11 activates PLC-beta (PLCB1, PLCB2, PLCB3 or PLCB4), leading to production of diacylglycerol (DAG) and inositol 1,4,5-trisphosphate (IP3). Transduces FFAR4 signaling in response to long-chain fatty acids (LCFAs). Together with GNAQ, required for heart development. In the respiratory epithelium, transmits OXGR1-dependent signals that lead to downstream intracellular Ca(2+) release and mucocilliary clearance of airborne pathogens. The polypeptide is Guanine nucleotide-binding protein subunit alpha-11 (GNA11) (Canis lupus familiaris (Dog)).